Consider the following 30-residue polypeptide: Rothein 3.4 (30 aa).

Leucine 30 carries the post-translational modification Leucine amide.

This sequence belongs to the frog skin active peptide (FSAP) family. Rothein subfamily. As to expression, expressed by the skin dorsal glands.

Its subcellular location is the secreted. Lacks antimicrobial activity. Does not inhibit the formation of NO by neuronal nitric oxide. This is Rothein 3.4 from Litoria rothii (Roth's tree frog).